A 243-amino-acid polypeptide reads, in one-letter code: Pyridoxine 5'-phosphate synthase (243 aa).

Residue N9 coordinates 3-amino-2-oxopropyl phosphate. Residue 11-12 coordinates 1-deoxy-D-xylulose 5-phosphate; the sequence is DH. R20 lines the 3-amino-2-oxopropyl phosphate pocket. The active-site Proton acceptor is the H45. The 1-deoxy-D-xylulose 5-phosphate site is built by R47 and H52. The Proton acceptor role is filled by E72. Residue T102 participates in 1-deoxy-D-xylulose 5-phosphate binding. Residue H193 is the Proton donor of the active site. 3-amino-2-oxopropyl phosphate contacts are provided by residues G194 and 215 to 216; that span reads GH.

The protein belongs to the PNP synthase family. As to quaternary structure, homooctamer; tetramer of dimers.

Its subcellular location is the cytoplasm. It catalyses the reaction 3-amino-2-oxopropyl phosphate + 1-deoxy-D-xylulose 5-phosphate = pyridoxine 5'-phosphate + phosphate + 2 H2O + H(+). It participates in cofactor biosynthesis; pyridoxine 5'-phosphate biosynthesis; pyridoxine 5'-phosphate from D-erythrose 4-phosphate: step 5/5. Its function is as follows. Catalyzes the complicated ring closure reaction between the two acyclic compounds 1-deoxy-D-xylulose-5-phosphate (DXP) and 3-amino-2-oxopropyl phosphate (1-amino-acetone-3-phosphate or AAP) to form pyridoxine 5'-phosphate (PNP) and inorganic phosphate. The protein is Pyridoxine 5'-phosphate synthase of Salmonella paratyphi A (strain ATCC 9150 / SARB42).